A 322-amino-acid polypeptide reads, in one-letter code: Dioxygenase himG (322 aa).

Fe cation contacts are provided by histidine 148 and histidine 229.

Belongs to the PhyH family. As to quaternary structure, homodimer. The cofactor is Fe cation.

It participates in secondary metabolite biosynthesis. Polyketide synthase-nonribosomal peptide synthetase; part of the him gene cluster that mediates the biosynthesis of himeic acid A, a ubiquitin-activating enzyme (E1) inhibitor. First, himA, together with the trans-enoyl reductase himH, catalyzes the formation of apolyketide chain, which is then condensed with leucine by the NRPS activity of himA. Dieckmann cyclization and release from himA gives a tetramic acid intermediate as the product of himA PKS-NRPS. HimG then catalyzes alpha-oxidation of the tetramic acid ring, with a subsequent rearrangement to yield apyrone intermediate. Two terminal methyl groups of polyketide and amide side chains are oxidized to carboxylic acids by himC cytochrome P450 monooxygenase to form himeic acid A. Himeic acid A is further converted to himeic acid B and C during culture growth. No gene responsible for pyrone to pyridone conversion was found in the him gene cluster and himeic acid A is non-enzymatically converted to himeic acid C by the incorporation of an ammonium nitrogen atom in a pH5 buffer, and to himeic acid B at a conversion ratio of 50% during incubation in MeOH for 5 days. The protein is Dioxygenase himG of Aspergillus japonicus.